The sequence spans 124 residues: Large ribosomal subunit protein uL18 (124 aa).

This sequence belongs to the universal ribosomal protein uL18 family. Part of the 50S ribosomal subunit; part of the 5S rRNA/L5/L18/L25 subcomplex. Contacts the 5S and 23S rRNAs.

Its function is as follows. This is one of the proteins that bind and probably mediate the attachment of the 5S RNA into the large ribosomal subunit, where it forms part of the central protuberance. This Orientia tsutsugamushi (strain Ikeda) (Rickettsia tsutsugamushi) protein is Large ribosomal subunit protein uL18.